Reading from the N-terminus, the 219-residue chain is Abasic site processing protein YobE (219 aa).

Cys-2 serves as the catalytic Nucleophile. Cys-2 is subject to Thiazolidine linkage to a ring-opened DNA abasic site. Glu-106 is a catalytic residue.

It belongs to the SOS response-associated peptidase family.

Formation and reversal of DNA-protein cross-link depends on DNA context. Catalyzes formation of the thiazolidine linkage in presence of abasic sites in single-stranded DNA. Mediates the reversal of the thiazolidine cross-link in presence of double stranded DNA. Functionally, sensor of abasic sites in single-stranded DNA (ssDNA) required to preserve genome integrity by promoting error-free repair of abasic sites. Recognizes and binds abasic sites in ssDNA at replication forks and chemically modifies the lesion by forming a covalent cross-link with DNA: forms a stable thiazolidine linkage between a ring-opened abasic site and the alpha-amino and sulfhydryl substituents of its N-terminal catalytic cysteine residue. The DNA-protein cross-link is then reversed: able to catalyze the reversal of the thiazolidine cross-link and cycle between a cross-link and a non-cross-linked state depending on DNA context: mediates self-reversal of the thiazolidine cross-link in double stranded DNA. May act as a protease: mediates autocatalytic processing of its N-terminal methionine in order to expose the catalytic cysteine. The polypeptide is Abasic site processing protein YobE (yobE) (Bacillus subtilis (strain 168)).